The chain runs to 416 residues: 3-isopropylmalate dehydratase large subunit (416 aa).

[4Fe-4S] cluster contacts are provided by Cys-299, Cys-357, and Cys-360.

This sequence belongs to the aconitase/IPM isomerase family. LeuC type 2 subfamily. As to quaternary structure, heterodimer of LeuC and LeuD. [4Fe-4S] cluster is required as a cofactor.

It carries out the reaction (2R,3S)-3-isopropylmalate = (2S)-2-isopropylmalate. It functions in the pathway amino-acid biosynthesis; L-leucine biosynthesis; L-leucine from 3-methyl-2-oxobutanoate: step 2/4. In terms of biological role, catalyzes the isomerization between 2-isopropylmalate and 3-isopropylmalate, via the formation of 2-isopropylmaleate. This chain is 3-isopropylmalate dehydratase large subunit, found in Saccharolobus solfataricus (strain ATCC 35092 / DSM 1617 / JCM 11322 / P2) (Sulfolobus solfataricus).